We begin with the raw amino-acid sequence, 122 residues long: Urease subunit beta (122 aa).

Positions 102–122 are disordered; it reads DGGTAVAGEPRPGIAAERDHQ.

The protein belongs to the urease beta subunit family. As to quaternary structure, heterotrimer of UreA (gamma), UreB (beta) and UreC (alpha) subunits. Three heterotrimers associate to form the active enzyme.

The protein localises to the cytoplasm. It catalyses the reaction urea + 2 H2O + H(+) = hydrogencarbonate + 2 NH4(+). It functions in the pathway nitrogen metabolism; urea degradation; CO(2) and NH(3) from urea (urease route): step 1/1. This is Urease subunit beta from Paenarthrobacter aurescens (strain TC1).